The chain runs to 220 residues: Deoxyribose-phosphate aldolase (220 aa).

The Proton donor/acceptor role is filled by D89. K151 acts as the Schiff-base intermediate with acetaldehyde in catalysis. K180 acts as the Proton donor/acceptor in catalysis.

It belongs to the DeoC/FbaB aldolase family. DeoC type 1 subfamily.

It localises to the cytoplasm. The enzyme catalyses 2-deoxy-D-ribose 5-phosphate = D-glyceraldehyde 3-phosphate + acetaldehyde. It participates in carbohydrate degradation; 2-deoxy-D-ribose 1-phosphate degradation; D-glyceraldehyde 3-phosphate and acetaldehyde from 2-deoxy-alpha-D-ribose 1-phosphate: step 2/2. Functionally, catalyzes a reversible aldol reaction between acetaldehyde and D-glyceraldehyde 3-phosphate to generate 2-deoxy-D-ribose 5-phosphate. In Streptococcus pneumoniae (strain Hungary19A-6), this protein is Deoxyribose-phosphate aldolase.